A 171-amino-acid polypeptide reads, in one-letter code: Probable deoxyuridine 5'-triphosphate nucleotidohydrolase (171 aa).

It belongs to the dCTP deaminase family. Archaeal dUTPase subfamily.

It carries out the reaction dUTP + H2O = dUMP + diphosphate + H(+). It functions in the pathway pyrimidine metabolism; dUMP biosynthesis; dUMP from dCTP (dUTP route): step 2/2. Its function is as follows. This enzyme is involved in nucleotide metabolism: it produces dUMP, the immediate precursor of thymidine nucleotides and it decreases the intracellular concentration of dUTP so that uracil cannot be incorporated into DNA. The protein is Probable deoxyuridine 5'-triphosphate nucleotidohydrolase of Methanosarcina mazei (strain ATCC BAA-159 / DSM 3647 / Goe1 / Go1 / JCM 11833 / OCM 88) (Methanosarcina frisia).